The sequence spans 435 residues: Endoglucanase EG-1 (435 aa).

The first 20 residues, 1–20, serve as a signal peptide directing secretion; that stretch reads MARGTALLGLTSLLLGLVNG. A Pyrrolidone carboxylic acid modification is found at glutamine 21. Cystine bridges form between cysteine 38–cysteine 44, cysteine 71–cysteine 93, and cysteine 83–cysteine 89. N-linked (GlcNAc...) asparagine glycosylation is present at asparagine 109. 6 disulfide bridges follow: cysteine 160–cysteine 385, cysteine 192–cysteine 215, cysteine 196–cysteine 214, cysteine 235–cysteine 254, cysteine 243–cysteine 248, and cysteine 259–cysteine 335. The active-site Nucleophile is the glutamate 217. Glutamate 222 serves as the catalytic Proton donor. Asparagine 267 is a glycosylation site (N-linked (GlcNAc...) asparagine).

Belongs to the glycosyl hydrolase 7 (cellulase C) family.

It localises to the secreted. The enzyme catalyses Endohydrolysis of (1-&gt;4)-beta-D-glucosidic linkages in cellulose, lichenin and cereal beta-D-glucans.. Its function is as follows. The biological conversion of cellulose to glucose generally requires three types of hydrolytic enzymes: (1) Endoglucanases which cut internal beta-1,4-glucosidic bonds; (2) Exocellobiohydrolases that cut the disaccharide cellobiose from the non-reducing end of the cellulose polymer chain; (3) Beta-1,4-glucosidases which hydrolyze the cellobiose and other short cello-oligosaccharides to glucose. This Humicola insolens (Soft-rot fungus) protein is Endoglucanase EG-1 (EG-1).